Here is a 457-residue protein sequence, read N- to C-terminus: ATP-dependent RNA helicase DbpA (457 aa).

A Q motif motif is present at residues 3-31; it reads AFSTLNVLPPAQLTNLNELGYLTMTPVQA. One can recognise a Helicase ATP-binding domain in the interval 34-205; it reads LPAILAGKDV…GRVQRDPLAI (172 aa). Position 47-54 (47-54) interacts with ATP; it reads AKTGSGKT. Residues 153-156 carry the DEAD box motif; that stretch reads DEAD. A Helicase C-terminal domain is found at 230–376; it reads PLLQRLLSLH…QTPPANSSIA (147 aa). An involved in 23S rRNA binding region spans residues 383-457; it reads ATLCIDGGKK…GKTCRVRLLK (75 aa).

It belongs to the DEAD box helicase family. DbpA subfamily. As to quaternary structure, monomer.

It localises to the cytoplasm. The catalysed reaction is ATP + H2O = ADP + phosphate + H(+). With respect to regulation, requires hairpin 92 of 23S rRNA for optimal activity. ATPase activity is stimulated by interaction of the N-terminal domain with RNA. DEAD-box RNA helicase involved in the assembly of the 50S ribosomal subunit. Has an RNA-dependent ATPase activity, which is specific for 23S rRNA, and a 3' to 5' RNA helicase activity that uses the energy of ATP hydrolysis to destabilize and unwind short rRNA duplexes. Requires a single-stranded RNA loading site on the 3' side of the substrate helix. In Escherichia coli (strain K12), this protein is ATP-dependent RNA helicase DbpA.